Here is a 108-residue protein sequence, read N- to C-terminus: PTS system fructose-like EIIB component 1 (108 aa).

The PTS EIIB type-2 domain occupies Met-1 to Glu-101. Cys-11 serves as the catalytic Phosphocysteine intermediate. Phosphocysteine; by EIIA is present on Cys-11.

It is found in the cytoplasm. The catalysed reaction is D-fructose(out) + N(pros)-phospho-L-histidyl-[protein] = D-fructose 1-phosphate(in) + L-histidyl-[protein]. In terms of biological role, the phosphoenolpyruvate-dependent sugar phosphotransferase system (sugar PTS), a major carbohydrate active transport system, catalyzes the phosphorylation of incoming sugar substrates concomitantly with their translocation across the cell membrane. The enzyme II FryABC PTS system is involved in fructose transport. In Shigella flexneri, this protein is PTS system fructose-like EIIB component 1 (fryB).